Here is a 227-residue protein sequence, read N- to C-terminus: ATP-dependent dethiobiotin synthetase BioD (227 aa).

Residue 13 to 18 (DVGKTV) participates in ATP binding. Residue threonine 17 participates in Mg(2+) binding. The active site involves lysine 38. ATP contacts are provided by residues aspartate 55, 116–119 (EGAG), and 176–177 (NR). Mg(2+) is bound by residues aspartate 55 and glutamate 116.

The protein belongs to the dethiobiotin synthetase family. In terms of assembly, homodimer. Requires Mg(2+) as cofactor.

The protein resides in the cytoplasm. It catalyses the reaction (7R,8S)-7,8-diammoniononanoate + CO2 + ATP = (4R,5S)-dethiobiotin + ADP + phosphate + 3 H(+). It functions in the pathway cofactor biosynthesis; biotin biosynthesis; biotin from 7,8-diaminononanoate: step 1/2. Its function is as follows. Catalyzes a mechanistically unusual reaction, the ATP-dependent insertion of CO2 between the N7 and N8 nitrogen atoms of 7,8-diaminopelargonic acid (DAPA, also called 7,8-diammoniononanoate) to form a ureido ring. This chain is ATP-dependent dethiobiotin synthetase BioD, found in Aliivibrio salmonicida (strain LFI1238) (Vibrio salmonicida (strain LFI1238)).